The chain runs to 580 residues: Arginine--tRNA ligase (580 aa).

A 'HIGH' region motif is present at residues 123–133; it reads PNIAKEMHVGH.

The protein belongs to the class-I aminoacyl-tRNA synthetase family. Monomer.

It localises to the cytoplasm. It catalyses the reaction tRNA(Arg) + L-arginine + ATP = L-arginyl-tRNA(Arg) + AMP + diphosphate. The chain is Arginine--tRNA ligase (argS) from Buchnera aphidicola subsp. Schizaphis graminum (strain Sg).